The sequence spans 156 residues: Small ribosomal subunit protein uS7 (156 aa).

The protein belongs to the universal ribosomal protein uS7 family. In terms of assembly, part of the 30S ribosomal subunit. Contacts proteins S9 and S11.

Its function is as follows. One of the primary rRNA binding proteins, it binds directly to 16S rRNA where it nucleates assembly of the head domain of the 30S subunit. Is located at the subunit interface close to the decoding center, probably blocks exit of the E-site tRNA. In Aeromonas salmonicida (strain A449), this protein is Small ribosomal subunit protein uS7.